Consider the following 421-residue polypeptide: Synaptotagmin-1 (421 aa).

Positions 1 to 40 are disordered; sequence MVSESHHEALAAPPATTVAAAPPSNVTEPASPGGGGGKED. Topologically, residues 1-60 are vesicular; that stretch reads MVSESHHEALAAPPATTVAAAPPSNVTEPASPGGGGGKEDAFSKLKEKFMNELNKIPLPP. Residues 10-23 are compositionally biased toward low complexity; the sequence is LAAPPATTVAAAPP. N-linked (GlcNAc...) asparagine glycosylation occurs at asparagine 25. Residues 61–81 traverse the membrane as a helical segment; that stretch reads WALIAIAIVAVLLILTCCFCL. Residues cysteine 77, cysteine 78, cysteine 80, cysteine 82, and cysteine 85 are each lipidated (S-palmitoyl cysteine). Residues 82-421 lie on the Cytoplasmic side of the membrane; the sequence is CKKCLFKKKN…EVDAMLAVKK (340 aa). The tract at residues 94–139 is disordered; sequence KGKEKGGKNAINMKDVKDLGKTMKDQDDDAETGLTDGEEKEEPKEV. Residues 107-118 are compositionally biased toward basic and acidic residues; it reads KDVKDLGKTMKD. A compositionally biased stretch (acidic residues) spans 119–133; the sequence is QDDDAETGLTDGEEK. The interval 135–381 is phospholipid binding; sequence EPKEVEKLGK…AIGKVFVGYN (247 aa). 2 consecutive C2 domains span residues 141–260 and 272–405; these read KLGK…EEWR and KLGD…AQWH. Ca(2+) contacts are provided by leucine 171, aspartate 172, aspartate 178, aspartate 230, phenylalanine 231, aspartate 232, serine 235, lysine 236, aspartate 238, aspartate 303, aspartate 309, aspartate 363, aspartate 365, and aspartate 371.

The protein belongs to the synaptotagmin family. In terms of assembly, homotetramer. The cofactor is Ca(2+).

The protein resides in the cytoplasmic vesicle. The protein localises to the secretory vesicle membrane. It localises to the secretory vesicle. Its subcellular location is the synaptic vesicle membrane. It is found in the chromaffin granule membrane. The protein resides in the cytoplasm. Functionally, calcium sensor that participates in triggering neurotransmitter release at the synapse. May have a regulatory role in the membrane interactions during trafficking of synaptic vesicles at the active zone of the synapse. It binds acidic phospholipids with a specificity that requires the presence of both an acidic head group and a diacyl backbone. May play a role in dendrite formation by melanocytes. May play a role in regulating the secretion of hormones relevant to the reproduction and egg-laying of female geese. The polypeptide is Synaptotagmin-1 (Anser cygnoides (Swan goose)).